A 425-amino-acid chain; its full sequence is Dihydroorotase (425 aa).

Residues His-56 and His-58 each coordinate Zn(2+). Residues His-58–Arg-60 and Asn-90 contribute to the substrate site. Positions 147, 174, and 227 each coordinate Zn(2+). Asn-273 contributes to the substrate binding site. Asp-300 is a Zn(2+) binding site. Asp-300 is an active-site residue. Substrate-binding positions include His-304 and Phe-318 to Gly-319.

Belongs to the metallo-dependent hydrolases superfamily. DHOase family. Class I DHOase subfamily. The cofactor is Zn(2+).

The enzyme catalyses (S)-dihydroorotate + H2O = N-carbamoyl-L-aspartate + H(+). Its pathway is pyrimidine metabolism; UMP biosynthesis via de novo pathway; (S)-dihydroorotate from bicarbonate: step 3/3. Its function is as follows. Catalyzes the reversible cyclization of carbamoyl aspartate to dihydroorotate. This chain is Dihydroorotase, found in Fusobacterium nucleatum subsp. nucleatum (strain ATCC 25586 / DSM 15643 / BCRC 10681 / CIP 101130 / JCM 8532 / KCTC 2640 / LMG 13131 / VPI 4355).